A 270-amino-acid chain; its full sequence is Hematopoietically-expressed homeobox protein HHEX (270 aa).

The tract at residues 1-137 is interaction with SOX13; the sequence is MQYPHPGPAA…PFLQRPLHKR (137 aa). S53 carries the phosphoserine modification. Positions 137–196 form a DNA-binding region, homeobox; it reads RKGGQVRFSNDQTIELEKKFETQKYLSPPERKRLAKMLQLSERQVKTWFQNRRAKWRRLK. The tract at residues 137–270 is required for WNT signaling induction; it reads RKGGQVRFSN…EGDKSYFNAG (134 aa). Residues 194–270 are disordered; the sequence is RLKQENPQSN…EGDKSYFNAG (77 aa). Polar residues predominate over residues 222 to 241; that stretch reads PSEQNKGASLDSSQCSPSPA. Acidic residues predominate over residues 244 to 260; that stretch reads EDLESEISEDSDQEVDI.

As to quaternary structure, interacts with CD81; the interaction prevents nuclear translocation of HHEX. Interacts (via N-terminus) with SOX13; abolishes the SOX13-mediated inhibition of WNT-mediated transcriptional activity via competitive inhibition of the SOX13-TCF7 complex. Interacts with EIF4E; the interaction inhibits EIF4E-mediated mRNA nuclear export. In terms of tissue distribution, liver and promyelocytic leukemia cell line HL-60.

Its subcellular location is the nucleus. It localises to the nuclear body. The protein resides in the cytoplasm. Its function is as follows. Recognizes the DNA sequence 5'-ATTAA-3'. Transcriptional repressor. Activator of WNT-mediated transcription in conjunction with CTNNB1. Establishes anterior identity at two levels; acts early to enhance canonical WNT-signaling by repressing expression of TLE4, and acts later to inhibit NODAL-signaling by directly targeting NODAL. Inhibits EIF4E-mediated mRNA nuclear export. May play a role in hematopoietic differentiation. The sequence is that of Hematopoietically-expressed homeobox protein HHEX (HHEX) from Homo sapiens (Human).